The chain runs to 784 residues: Spindle pole body component alp4 (784 aa).

Belongs to the TUBGCP family. In terms of assembly, part of the gamma-tubulin complex. Interacts with mcp6. Interacts with mto1. Interacts with mto2.

Its subcellular location is the cytoplasm. It is found in the cytoskeleton. It localises to the microtubule organizing center. The protein resides in the spindle pole body. Its function is as follows. Component of the gamma tubule complex that is required for the regulation of both interphase microtubules and mitotic bipolar spindles. This Schizosaccharomyces pombe (strain 972 / ATCC 24843) (Fission yeast) protein is Spindle pole body component alp4 (alp4).